The sequence spans 550 residues: Glucose-6-phosphate isomerase (550 aa).

The active-site Proton donor is Glu-356. Residues His-387 and Lys-515 contribute to the active site.

This sequence belongs to the GPI family.

It is found in the cytoplasm. It catalyses the reaction alpha-D-glucose 6-phosphate = beta-D-fructose 6-phosphate. It functions in the pathway carbohydrate biosynthesis; gluconeogenesis. Its pathway is carbohydrate degradation; glycolysis; D-glyceraldehyde 3-phosphate and glycerone phosphate from D-glucose: step 2/4. Catalyzes the reversible isomerization of glucose-6-phosphate to fructose-6-phosphate. This chain is Glucose-6-phosphate isomerase, found in Aliivibrio fischeri (strain MJ11) (Vibrio fischeri).